The following is a 1439-amino-acid chain: Mediator of RNA polymerase II transcription subunit 23 (1439 aa).

The stretch at 282-318 forms a coiled coil; that stretch reads SQMLNLQKHQKQRYNALEEQLVNLIVQAMEMTEANDA. An interaction with Hsf region spans residues 358 to 625; sequence HIVLALHEKL…HHVPTHYRVQ (268 aa). Disordered regions lie at residues 1338 to 1372 and 1401 to 1439; these read NDNT…QQQQ and SVPL…MRHN. Low complexity-rich tracts occupy residues 1348–1372 and 1411–1439; these read SQTQ…QQQQ and QQQQ…MRHN.

Belongs to the Mediator complex subunit 23 family. Component of the Mediator complex. Interacts with Hsf.

The protein localises to the nucleus. In terms of biological role, component of the Mediator complex, a coactivator involved in the regulated transcription of nearly all RNA polymerase II-dependent genes. Mediator functions as a bridge to convey information from gene-specific regulatory proteins to the basal RNA polymerase II transcription machinery. Mediator is recruited to promoters by direct interactions with regulatory proteins and serves as a scaffold for the assembly of a functional preinitiation complex with RNA polymerase II and the general transcription factors. Required for transcriptional activation in response to heat shock. In Drosophila melanogaster (Fruit fly), this protein is Mediator of RNA polymerase II transcription subunit 23 (MED23).